The following is a 415-amino-acid chain: Adenylosuccinate synthetase (415 aa).

Residues 12 to 18 (GDEGKGK) and 40 to 42 (GHT) contribute to the GTP site. Asp-13 serves as the catalytic Proton acceptor. Mg(2+)-binding residues include Asp-13 and Gly-40. Residues 13–16 (DEGK), 38–41 (NAGH), Thr-125, Arg-139, Gln-219, Thr-234, and Arg-298 each bind IMP. The Proton donor role is filled by His-41. 294 to 300 (TTTGRPR) is a substrate binding site. Residues Arg-300, 326 to 328 (KLD), and 404 to 406 (STG) contribute to the GTP site.

Belongs to the adenylosuccinate synthetase family. In terms of assembly, homodimer. Mg(2+) is required as a cofactor.

The protein resides in the cytoplasm. The catalysed reaction is IMP + L-aspartate + GTP = N(6)-(1,2-dicarboxyethyl)-AMP + GDP + phosphate + 2 H(+). The protein operates within purine metabolism; AMP biosynthesis via de novo pathway; AMP from IMP: step 1/2. Plays an important role in the de novo pathway of purine nucleotide biosynthesis. Catalyzes the first committed step in the biosynthesis of AMP from IMP. The protein is Adenylosuccinate synthetase of Wolinella succinogenes (strain ATCC 29543 / DSM 1740 / CCUG 13145 / JCM 31913 / LMG 7466 / NCTC 11488 / FDC 602W) (Vibrio succinogenes).